The primary structure comprises 770 residues: Shutoff protein (770 aa).

Disordered regions lie at residues 1-20 (MEED…PNSE) and 30-49 (EEEN…PEDG). A compositionally biased stretch (polar residues) spans 10 to 19 (DSETLTTPNS). Residues 248–312 (VMDQVLIKRA…AVLVTVELEC (65 aa)) form a binding to host EIF4G region. Positions 315-433 (RFFANPQTLR…ELWTSFDERT (119 aa)) constitute an RRM domain. Phosphotyrosine; by host is present on residues tyrosine 332 and tyrosine 647. The interval 661–770 (LSAAASCRSQ…TATMFTESQP (110 aa)) is disordered. The span at 726–739 (GGPRGRGGRNHRQR) shows a compositional bias: basic residues. The span at 742–755 (TIFQKTRSEPTSEN) shows a compositional bias: polar residues.

The protein belongs to the adenoviridae shutoff protein family. In terms of assembly, monomer. Interacts with hexon protein; this interaction allows chaperoning and trimerization of hexon proteins. Interacts (via N-terminus) with host initiation factor EIF4G (via C-terminus). Interacts (via RRM domain) with viral mRNAs that contain the tripartite leader; this interaction allows ribosome shunting and expression of viral late mRNAs. Might be cleaved by the viral protease. Post-translationally, phosphorylated. Tyrosine phosphorylation enhances preferential binding to tripartite leader mRNAs and allows ribosome shunting. In terms of processing, methylated. Asymmetric dimethylation by host PRMT1 of the Arg/Gly-rich region may regulate shutoff protein binding to hexon and promote the capsid assembly in the nucleus.

Its subcellular location is the host cytoplasm. In terms of biological role, protein that inhibits host translation while promoting late viral translation by ribosome shunting. Blocks host cap-dependent translation by binding to eIF4G, displacing MKNK1 from cap initiation complexes and preventing EIF4E phosphorylation. Binds to the tripartite leader sequence of viral late mRNAs and recruits host eIF4G, PABPC1/poly-A binding protein and 40S ribosomes subunits on viral mRNAs, allowing ribosome shunting and efficient translation of late viral mRNAs even though conventional translation via ribosome scanning from the cap has been shut off in the host cell. During assembly, acts as a chaperone protein that helps hexon proteins assembly into trimers. In Human adenovirus F serotype 40 (HAdV-40), this protein is Shutoff protein.